Consider the following 116-residue polypeptide: MSGSTAIGLTTEVISIITFILVIAIFVIEIVSCVTMMTLKAITLKKRLSFCQGCGKNASLVILPCKNKVCMECALKMRCPVCYEACLWCENPDGSLSSLALINKERNKVRDNLPEP.

The chain crosses the membrane as a helical span at residues Val13 to Cys33.

The protein resides in the host membrane. In Alethinophid 1 reptarenavirus (isolate AlRrV1/Boa/USA/BC/2009) (Golden Gate virus), this protein is Putative membrane protein.